Consider the following 956-residue polypeptide: Protein translocase subunit SecA (956 aa).

ATP contacts are provided by residues Q87, 105–109 (GEGKT), and D524. Residues C940, C942, C951, and H952 each contribute to the Zn(2+) site.

This sequence belongs to the SecA family. As to quaternary structure, monomer and homodimer. Part of the essential Sec protein translocation apparatus which comprises SecA, SecYEG and auxiliary proteins SecDF-YajC and YidC. The cofactor is Zn(2+).

The protein resides in the cell inner membrane. It localises to the cytoplasm. The catalysed reaction is ATP + H2O + cellular proteinSide 1 = ADP + phosphate + cellular proteinSide 2.. Its function is as follows. Part of the Sec protein translocase complex. Interacts with the SecYEG preprotein conducting channel. Has a central role in coupling the hydrolysis of ATP to the transfer of proteins into and across the cell membrane, serving both as a receptor for the preprotein-SecB complex and as an ATP-driven molecular motor driving the stepwise translocation of polypeptide chains across the membrane. The polypeptide is Protein translocase subunit SecA (Beijerinckia indica subsp. indica (strain ATCC 9039 / DSM 1715 / NCIMB 8712)).